The primary structure comprises 147 residues: Large ribosomal subunit protein uL11 (147 aa).

The protein belongs to the universal ribosomal protein uL11 family. As to quaternary structure, part of the ribosomal stalk of the 50S ribosomal subunit. Interacts with L10 and the large rRNA to form the base of the stalk. L10 forms an elongated spine to which L12 dimers bind in a sequential fashion forming a multimeric L10(L12)X complex. In terms of processing, one or more lysine residues are methylated.

Forms part of the ribosomal stalk which helps the ribosome interact with GTP-bound translation factors. The sequence is that of Large ribosomal subunit protein uL11 from Thermus thermophilus (strain ATCC BAA-163 / DSM 7039 / HB27).